A 158-amino-acid polypeptide reads, in one-letter code: Fibroblast growth factor 2 (158 aa).

The propeptide occupies 1–12 (MAAGAAGSITTL). Residue Asn39 participates in heparin binding. Positions 131 to 147 (KRTGQYKPGPKTGPGQK) are heparin-binding.

It belongs to the heparin-binding growth factors family.

It is found in the secreted. It localises to the nucleus. Its function is as follows. Acts as a ligand for FGFR1, FGFR2, FGFR3 and FGFR4. Also acts as an integrin ligand which is required for FGF2 signaling. Plays an important role in the regulation of cell survival, cell division, cell differentiation and cell migration. Functions as a potent mitogen in vitro. Can induce angiogenesis. The protein is Fibroblast growth factor 2 (FGF2) of Gallus gallus (Chicken).